Reading from the N-terminus, the 215-residue chain is Fibrillarin-like rRNA/tRNA 2'-O-methyltransferase (215 aa).

Residues 1 to 29 (MKASSSLPDGVQRRQFDNRSRLTTHGTTV) form a disordered region. Positions 11–20 (VQRRQFDNRS) are enriched in basic and acidic residues. S-adenosyl-L-methionine contacts are provided by residues 76-77 (TT), 92-93 (EF), 117-118 (DA), and 138-141 (DVAT).

The protein belongs to the methyltransferase superfamily. Fibrillarin family. In terms of assembly, interacts with nop5. Component of box C/D small ribonucleoprotein (sRNP) particles that contain rpl7ae, FlpA and nop5, plus a guide RNA.

Its function is as follows. Involved in pre-rRNA and tRNA processing. Utilizes the methyl donor S-adenosyl-L-methionine to catalyze the site-specific 2'-hydroxyl methylation of ribose moieties in rRNA and tRNA. Site specificity is provided by a guide RNA that base pairs with the substrate. Methylation occurs at a characteristic distance from the sequence involved in base pairing with the guide RNA. The polypeptide is Fibrillarin-like rRNA/tRNA 2'-O-methyltransferase (Haloquadratum walsbyi (strain DSM 16790 / HBSQ001)).